Here is a 333-residue protein sequence, read N- to C-terminus: Glycerol-3-phosphate dehydrogenase [NAD(P)+] (333 aa).

Residues tryptophan 11, arginine 30, and lysine 105 each coordinate NADPH. Sn-glycerol 3-phosphate is bound by residues lysine 105, glycine 133, and serine 135. Alanine 137 contacts NADPH. Residues lysine 188, aspartate 241, serine 251, arginine 252, and asparagine 253 each coordinate sn-glycerol 3-phosphate. Lysine 188 serves as the catalytic Proton acceptor. Arginine 252 is a binding site for NADPH. NADPH is bound by residues valine 276 and glutamate 278.

It belongs to the NAD-dependent glycerol-3-phosphate dehydrogenase family.

The protein resides in the cytoplasm. The enzyme catalyses sn-glycerol 3-phosphate + NAD(+) = dihydroxyacetone phosphate + NADH + H(+). It carries out the reaction sn-glycerol 3-phosphate + NADP(+) = dihydroxyacetone phosphate + NADPH + H(+). Its pathway is membrane lipid metabolism; glycerophospholipid metabolism. Functionally, catalyzes the reduction of the glycolytic intermediate dihydroxyacetone phosphate (DHAP) to sn-glycerol 3-phosphate (G3P), the key precursor for phospholipid synthesis. In Methylibium petroleiphilum (strain ATCC BAA-1232 / LMG 22953 / PM1), this protein is Glycerol-3-phosphate dehydrogenase [NAD(P)+].